The sequence spans 442 residues: Tyrosine--tRNA ligase (442 aa).

Tyr-55 contacts L-tyrosine. Positions 60 to 69 (PTAPSLHLGN) match the 'HIGH' region motif. Residues Tyr-190 and Gln-194 each coordinate L-tyrosine. A 'KMSKS' region motif is present at residues 250 to 254 (KFGKS). Residue Lys-253 participates in ATP binding. Residues 373-438 (VAIAQALVDT…GKKTLAGVFV (66 aa)) form the S4 RNA-binding domain.

Belongs to the class-I aminoacyl-tRNA synthetase family. TyrS type 1 subfamily. In terms of assembly, homodimer.

Its subcellular location is the cytoplasm. The enzyme catalyses tRNA(Tyr) + L-tyrosine + ATP = L-tyrosyl-tRNA(Tyr) + AMP + diphosphate + H(+). Catalyzes the attachment of tyrosine to tRNA(Tyr) in a two-step reaction: tyrosine is first activated by ATP to form Tyr-AMP and then transferred to the acceptor end of tRNA(Tyr). The protein is Tyrosine--tRNA ligase of Leifsonia xyli subsp. xyli (strain CTCB07).